A 97-amino-acid chain; its full sequence is Small ribosomal subunit protein bS20c (97 aa).

A compositionally biased stretch (polar residues) spans 1–15 (MSKNVSAIKKNQVSL). Residues 1–20 (MSKNVSAIKKNQVSLRNKRK) form a disordered region.

This sequence belongs to the bacterial ribosomal protein bS20 family.

The protein localises to the plastid. The protein resides in the chloroplast. Binds directly to 16S ribosomal RNA. The polypeptide is Small ribosomal subunit protein bS20c (Gracilaria tenuistipitata var. liui (Red alga)).